The following is a 175-amino-acid chain: Beta-carotene hydroxylase (175 aa).

Positions 11-136 constitute a Fatty acid hydroxylase domain; the sequence is FVTVIGMEVI…RGKEGCVSFG (126 aa).

It belongs to the sterol desaturase family.

It carries out the reaction all-trans-beta-carotene + 4 reduced [2Fe-2S]-[ferredoxin] + 2 O2 + 4 H(+) = all-trans-zeaxanthin + 4 oxidized [2Fe-2S]-[ferredoxin] + 2 H2O. Its pathway is carotenoid biosynthesis; zeaxanthin biosynthesis. Its function is as follows. Catalyzes the hydroxylation reaction from beta-carotene to zeaxanthin. This is Beta-carotene hydroxylase (crtZ) from Pantoea ananas (Erwinia uredovora).